We begin with the raw amino-acid sequence, 877 residues long: MAVATGLARLPVVCNQRLAELLRQVDDVDLLWLEEIHEEAARMFGSHYSDQPELMPKTPSQKNRKRRKRPSALRGESLELGRRRLSRRRTNNLKAVSSKRDSQRLQNKEDTEGLGTEAQELSSQTVSRRLTRSQVAAPADRSEVLPEHLRERVVPVVEISVCDRISAEFQFQKCASERAENHSASLPPSSDDKSPKESSAAESQPLPAASELIVPHTPEAKGAGKNKSAFKKTANVADTTVVLSEKELGLEEVDDSAQVQKHNERDDKEPSQRTTDSPETPTGSRLSRRSVRRSLMGKPSTIRRTSLAEKYSLARKRESTIRKSIARTVIKRKAPQKLSVSSSSVNGSGSEEVPEDEETVVNAGPPPVPQTPPKLDFQGLRMSLRSQTVNRNEQQQETSNNECDLSKSEKTQEPPQSARRKTSYKRAVDQRYDTQQAEDGGLSPLRKKTPSPPCPASKVVRPFKTFLHTVEKNQLLMTPSSVGRNGVIKSFIKYNTPLQHDPKEKERQKLQALRKKEEAEQLRKQKVEEEKKRRQEEAKLRREERLRKVLQARERAEQLEEERKRRIEQKLALFDEKTEKAREERLAEEKIKKRAAAKKMEEAEARRRQDEEARKQKALQQEEEERRHKELMQKKKEEEQERARKIAEQRQAEQEREKQLAAEREQERKKEQERKKEEERIQAEKQREQQEKAARLQKEVLAAKEQLQKEMEKKEKEEQLLAEMKRQEQEQKKLPEEQKAKDVAQTQHLENKENSPACNSYQMTPQYHKDPKPPKINPNNYGMDLNSDDSTDDESQPRKPIPAWASGNQLSQAVIRQYYNPPNVDALFGTIVSPKLEDIFYKSKPRYFKRTSSAVWNSPPFPGAKSVLGLPYSLKKY.

The segment at 47 to 142 (HYSDQPELMP…SQVAAPADRS (96 aa)) is disordered. Residues 62–71 (KNRKRRKRPS) show a composition bias toward basic residues. Residues 98-111 (SKRDSQRLQNKEDT) are compositionally biased toward basic and acidic residues. The segment covering 119–134 (QELSSQTVSRRLTRSQ) has biased composition (polar residues). Positions 135-270 (VAAPADRSEV…KHNERDDKEP (136 aa)) are interaction with CBX5. Residues 155–159 (PVVEI) carry the PXVXL/I motif motif. 5 disordered regions span residues 178 to 210 (RAEN…PAAS), 248 to 459 (LGLE…ASKV), 498 to 548 (LQHD…RLRK), 572 to 695 (ALFD…KAAR), and 707 to 805 (LQKE…PAWA). A compositionally biased stretch (basic and acidic residues) spans 261–271 (KHNERDDKEPS). Residues 272 to 283 (QRTTDSPETPTG) are compositionally biased toward polar residues. Residues 339–351 (SVSSSSVNGSGSE) are compositionally biased toward low complexity. The span at 384-403 (LRSQTVNRNEQQQETSNNEC) shows a compositional bias: polar residues. Composition is skewed to basic and acidic residues over residues 500 to 548 (HDPK…RLRK), 572 to 591 (ALFD…EEKI), 598 to 615 (KKME…EARK), 624 to 695 (EERR…KAAR), and 707 to 742 (LQKE…KAKD). The interval 503–715 (KEKERQKLQA…QLQKEMEKKE (213 aa)) is SAH. The segment covering 744–765 (AQTQHLENKENSPACNSYQMTP) has biased composition (polar residues). An IN box region spans residues 781–823 (YGMDLNSDDSTDDESQPRKPIPAWASGNQLSQAVIRQYYNPPN).

This sequence belongs to the INCENP family. Component of the chromosomal passenger complex (CPC) composed of at least BIRC5/survivin, CDCA8/borealin, INCENP and AURKB; in the complex binds directly to AURKB via the IN box, and forms a triple-helix bundle-based subcomplex with BIRC5 and CDCA8 via its N-terminus. The initially reported homodimerization is questioned as the SAH domain is shown to be monomeric. Interacts with CBX5.

The protein resides in the nucleus. Its subcellular location is the chromosome. The protein localises to the centromere. It localises to the cytoplasm. It is found in the cytoskeleton. The protein resides in the spindle. Its subcellular location is the midbody. The protein localises to the kinetochore. In terms of biological role, component of the chromosomal passenger complex (CPC), a complex that acts as a key regulator of mitosis. The CPC complex has essential functions at the centromere in ensuring correct chromosome alignment and segregation and is required for chromatin-induced microtubule stabilization and spindle assembly. Acts as a scaffold regulating CPC localization and activity. The C-terminus associates with AURKB, the N-terminus associated with BIRC5/survivin and CDCA8/borealin tethers the CPC to the inner centromere, and the microtubule binding activity within the central SAH domain directs AURKB toward substrates near microtubules. The flexibility of the SAH domain is proposed to allow AURKB to follow substrates on dynamic microtubules while ensuring CPC docking to static chromatin. Activates AURKB. The sequence is that of Inner centromere protein (INCENP) from Gallus gallus (Chicken).